The chain runs to 205 residues: Ribonuclease HII (205 aa).

Positions 16-205 (VSEVGIDEVG…KSFLNQSDLI (190 aa)) constitute an RNase H type-2 domain. D22, E23, and D118 together coordinate a divalent metal cation.

It belongs to the RNase HII family. Mn(2+) serves as cofactor. It depends on Mg(2+) as a cofactor.

It is found in the cytoplasm. The enzyme catalyses Endonucleolytic cleavage to 5'-phosphomonoester.. Its function is as follows. Endonuclease that specifically degrades the RNA of RNA-DNA hybrids. The polypeptide is Ribonuclease HII (Prochlorococcus marinus (strain MIT 9312)).